Reading from the N-terminus, the 1637-residue chain is Endoribonuclease Dicer homolog 3b (1637 aa).

The interval 1–40 (MADDEAAVLPPPPPLPPPCRPHRQLRPRGSRPTADTTPRT) is disordered. Over residues 9–19 (LPPPPPLPPPC) the composition is skewed to pro residues. A compositionally biased stretch (basic residues) spans 20-29 (RPHRQLRPRG). In terms of domain architecture, Helicase ATP-binding spans 46-222 (VFEAALRGNT…LHNCEAHISQ (177 aa)). 59–66 (LDTGSGKT) is an ATP binding site. Residues 169–172 (DECH) carry the DECH box motif. The Helicase C-terminal domain maps to 404-556 (SFGSSNEVLC…ALYRHPNALS (153 aa)). The region spanning 581–671 (CVNLIRKYCE…VPLTEEPMDT (91 aa)) is the Dicer dsRNA-binding fold domain. The PAZ domain maps to 882–1006 (EIIHLANKSL…VPPELLIHLD (125 aa)). The RNase III 1 domain maps to 1031–1200 (ASQLRREIGY…LVGAYYVGGG (170 aa)). Asp-1214, Asp-1309, and Ser-1312 together coordinate Mg(2+). Residues 1241–1389 (IEELEAKLKY…IAGAVFIDTD (149 aa)) enclose the RNase III 2 domain. DRBM domains are found at residues 1412 to 1481 (LALP…DLKQ) and 1545 to 1629 (GPRS…KLQE).

The protein belongs to the helicase family. Dicer subfamily. As to quaternary structure, may interact with ARGONAUTE1 or PINHEAD through their common PAZ domains. Requires Mg(2+) as cofactor. Mn(2+) serves as cofactor.

Its subcellular location is the nucleus. Its function is as follows. Probably involved in the RNA silencing pathway. May cleave double-stranded RNA to produce short 21-24 nucleotides (nt) RNAs which target the selective destruction of complementary RNAs. The chain is Endoribonuclease Dicer homolog 3b (DCL3B) from Oryza sativa subsp. japonica (Rice).